A 239-amino-acid polypeptide reads, in one-letter code: Serine protease SplF (239 aa).

The N-terminal stretch at 1–36 is a signal peptide; sequence MNKNIIIKSIGALTILTSITGVGTTMVEGIQQTAKA. Active-site charge relay system residues include His-75, Asp-114, and Ser-192.

Belongs to the peptidase S1B family.

It localises to the secreted. The protein is Serine protease SplF (splF) of Staphylococcus aureus (strain USA300).